We begin with the raw amino-acid sequence, 300 residues long: Protoheme IX farnesyltransferase (300 aa).

8 consecutive transmembrane segments (helical) span residues 24 to 44, 46 to 66, 94 to 114, 118 to 138, 146 to 166, 172 to 192, 224 to 244, and 278 to 298; these read VTQL…PGMV, WHVL…AFAI, PQIL…LYTF, LTMW…TLLL, IVIG…AVTG, AWIL…VLAL, VILF…VVYL, and IVYL…RPLL.

The protein belongs to the UbiA prenyltransferase family. Protoheme IX farnesyltransferase subfamily.

The protein localises to the cell inner membrane. The catalysed reaction is heme b + (2E,6E)-farnesyl diphosphate + H2O = Fe(II)-heme o + diphosphate. It participates in porphyrin-containing compound metabolism; heme O biosynthesis; heme O from protoheme: step 1/1. In terms of biological role, converts heme B (protoheme IX) to heme O by substitution of the vinyl group on carbon 2 of heme B porphyrin ring with a hydroxyethyl farnesyl side group. The polypeptide is Protoheme IX farnesyltransferase (Burkholderia ambifaria (strain ATCC BAA-244 / DSM 16087 / CCUG 44356 / LMG 19182 / AMMD) (Burkholderia cepacia (strain AMMD))).